Consider the following 405-residue polypeptide: MADPKYADLPGIARNEPDVYETSDLPEDDQAEFDAELEELTSTSVEHIIVNPNAAYDKFKDKKVGTRGLDFSDRITKSKRTGYESGEYEILGEGIGIKETPQQKYQRLLHEIQELTQEVEKAQSTVKESAAEEKLTPVALAKQVAALKQQLVSTHLEKLLGPDAAINLTDPDGALAKRLLTQLDVAKTRKNPEGKSPAKGPGPDNENFVTYELHCRPEQNKFSQAAKMAELEKRLGELEAAVRNDQDTQNPLTVGLQGSCLMDTVEILQAKVNLLDVASLDQVEARLQSVLGKMNEIAKHKAAIEDADTESKVHQLYETVQKWDSMSSTLPQVVQRLLMLKQLHEQAMQFGQLLAHLDTTQQMISNSLKDNTNALAMVQKAMKENLATVEDNFTSIDARIKKLSK.

Residues methionine 1–aspartate 24 are disordered. Residues proline 101–lysine 134 adopt a coiled-coil conformation. The segment at alanine 186 to asparagine 207 is disordered. A coiled-coil region spans residues lysine 383 to leucine 403.

This sequence belongs to the dynactin subunit 2 family. As to quaternary structure, subunit of dynactin, a multiprotein complex part of a tripartite complex with dynein and a adapter, such as BICDL1, BICD2 or HOOK3. The dynactin complex is built around ACTR1A/ACTB filament and consists of an actin-related filament composed of a shoulder domain, a pointed end and a barbed end. Its length is defined by its flexible shoulder domain. The soulder is composed of 2 DCTN1 subunits, 4 DCTN2 and 2 DCTN3.

It localises to the cytoplasm. The protein resides in the cytoskeleton. The protein localises to the microtubule organizing center. Its subcellular location is the centrosome. It is found in the membrane. In terms of biological role, part of the dynactin complex that activates the molecular motor dynein for ultra-processive transport along microtubules. In the dynactin soulder domain, binds the ACTR1A filament and acts as a molecular ruler to determine the length. Modulates cytoplasmic dynein binding to an organelle, and plays a role in prometaphase chromosome alignment and spindle organization during mitosis. Involved in anchoring microtubules to centrosomes. In Xenopus tropicalis (Western clawed frog), this protein is Dynactin subunit 2 (dctn2).